Consider the following 172-residue polypeptide: Shikimate kinase (172 aa).

11-16 (GAGKST) contributes to the ATP binding site. Ser-15 is a Mg(2+) binding site. Positions 33, 57, and 79 each coordinate substrate. Residue Arg-117 participates in ATP binding. Arg-136 contributes to the substrate binding site. Position 153 (Arg-153) interacts with ATP.

It belongs to the shikimate kinase family. Monomer. The cofactor is Mg(2+).

Its subcellular location is the cytoplasm. It catalyses the reaction shikimate + ATP = 3-phosphoshikimate + ADP + H(+). It participates in metabolic intermediate biosynthesis; chorismate biosynthesis; chorismate from D-erythrose 4-phosphate and phosphoenolpyruvate: step 5/7. Functionally, catalyzes the specific phosphorylation of the 3-hydroxyl group of shikimic acid using ATP as a cosubstrate. The polypeptide is Shikimate kinase (Pseudomonas paraeruginosa (strain DSM 24068 / PA7) (Pseudomonas aeruginosa (strain PA7))).